We begin with the raw amino-acid sequence, 59 residues long: Putative HTH-type transcriptional regulator YneL (59 aa).

The region spanning 1–59 (MSPLRYQKWLRLNEVRRQMLNEHYDVTTAAYAVGYESYPISVGNIRGCLESHPREILPG) is the HTH araC/xylS-type domain. Positions 26–49 (VTTAAYAVGYESYPISVGNIRGCL) form a DNA-binding region, H-T-H motif.

The chain is Putative HTH-type transcriptional regulator YneL (yneL) from Escherichia coli (strain K12).